Consider the following 530-residue polypeptide: T-complex protein 1 subunit gamma (530 aa).

It belongs to the TCP-1 chaperonin family. As to quaternary structure, heterooligomeric complex of about 850 to 900 kDa that forms two stacked rings, 12 to 16 nm in diameter.

The protein localises to the cytoplasm. In terms of biological role, molecular chaperone; assists the folding of proteins upon ATP hydrolysis. Known to play a role, in vitro, in the folding of actin and tubulin. This is T-complex protein 1 subunit gamma (cct3) from Dictyostelium discoideum (Social amoeba).